A 194-amino-acid chain; its full sequence is uncharacterized protein (194 aa).

Residues 17 to 37 traverse the membrane as a helical segment; it reads DVWLYLLVFGCLSVLVLVLVH.

Belongs to the IIV-6 307L family.

It is found in the membrane. This is an uncharacterized protein from Invertebrate iridescent virus 3 (IIV-3).